The sequence spans 151 residues: Phosphoribosyl-AMP cyclohydrolase (151 aa).

Polar residues predominate over residues 1–13 (MMTLTFASPPQNK). Residues 1 to 20 (MMTLTFASPPQNKSDLETGP) form a disordered region. Aspartate 93 contacts Mg(2+). Cysteine 94 provides a ligand contact to Zn(2+). The Mg(2+) site is built by aspartate 95 and aspartate 97. 2 residues coordinate Zn(2+): cysteine 112 and cysteine 119.

Belongs to the PRA-CH family. As to quaternary structure, homodimer. The cofactor is Mg(2+). It depends on Zn(2+) as a cofactor.

The protein localises to the cytoplasm. The enzyme catalyses 1-(5-phospho-beta-D-ribosyl)-5'-AMP + H2O = 1-(5-phospho-beta-D-ribosyl)-5-[(5-phospho-beta-D-ribosylamino)methylideneamino]imidazole-4-carboxamide. It functions in the pathway amino-acid biosynthesis; L-histidine biosynthesis; L-histidine from 5-phospho-alpha-D-ribose 1-diphosphate: step 3/9. In terms of biological role, catalyzes the hydrolysis of the adenine ring of phosphoribosyl-AMP. The polypeptide is Phosphoribosyl-AMP cyclohydrolase (Sinorhizobium medicae (strain WSM419) (Ensifer medicae)).